A 239-amino-acid polypeptide reads, in one-letter code: 2-C-methyl-D-erythritol 4-phosphate cytidylyltransferase (239 aa).

It belongs to the IspD/TarI cytidylyltransferase family. IspD subfamily.

It catalyses the reaction 2-C-methyl-D-erythritol 4-phosphate + CTP + H(+) = 4-CDP-2-C-methyl-D-erythritol + diphosphate. The protein operates within isoprenoid biosynthesis; isopentenyl diphosphate biosynthesis via DXP pathway; isopentenyl diphosphate from 1-deoxy-D-xylulose 5-phosphate: step 2/6. In terms of biological role, catalyzes the formation of 4-diphosphocytidyl-2-C-methyl-D-erythritol from CTP and 2-C-methyl-D-erythritol 4-phosphate (MEP). The chain is 2-C-methyl-D-erythritol 4-phosphate cytidylyltransferase from Ruthia magnifica subsp. Calyptogena magnifica.